Reading from the N-terminus, the 153-residue chain is Histone H2B.6 (153 aa).

Composition is skewed to basic and acidic residues over residues 1–28 (MAPK…EKAP) and 36–53 (EKRL…EGKK). The tract at residues 1–60 (MAPKAEKKPAAKKPAEEEPAAEKAEKAPAGKKPKAEKRLPAGKGEKGSGEGKKAGRKKGK) is disordered. N6-acetyllysine is present on residues Lys-7 and Lys-37. A Glycyl lysine isopeptide (Lys-Gly) (interchain with G-Cter in ubiquitin) cross-link involves residue Lys-149.

The protein belongs to the histone H2B family. The nucleosome is a histone octamer containing two molecules each of H2A, H2B, H3 and H4 assembled in one H3-H4 heterotetramer and two H2A-H2B heterodimers. The octamer wraps approximately 147 bp of DNA. Post-translationally, can be acetylated to form H2BK6ac and H2BK33ac. In terms of processing, monoubiquitinated by BRE1 to form H2BK143ub1 and deubiquitinated by UBP26. Required for heterochromatic histone H3 di- and trimethylation at H3K4me. May give a specific tag for epigenetic transcriptional activation.

The protein localises to the nucleus. It is found in the chromosome. Core component of nucleosome. Nucleosomes wrap and compact DNA into chromatin, limiting DNA accessibility to the cellular machineries which require DNA as a template. Histones thereby play a central role in transcription regulation, DNA repair, DNA replication and chromosomal stability. DNA accessibility is regulated via a complex set of post-translational modifications of histones, also called histone code, and nucleosome remodeling. The polypeptide is Histone H2B.6 (H2B.6) (Oryza sativa subsp. indica (Rice)).